A 139-amino-acid chain; its full sequence is ATP synthase epsilon chain (139 aa).

This sequence belongs to the ATPase epsilon chain family. In terms of assembly, F-type ATPases have 2 components, CF(1) - the catalytic core - and CF(0) - the membrane proton channel. CF(1) has five subunits: alpha(3), beta(3), gamma(1), delta(1), epsilon(1). CF(0) has three main subunits: a, b and c.

It localises to the cell inner membrane. In terms of biological role, produces ATP from ADP in the presence of a proton gradient across the membrane. This Pseudomonas putida (strain GB-1) protein is ATP synthase epsilon chain.